Reading from the N-terminus, the 38-residue chain is MKVKASVKVLCRNCKIVRRKNVVRVICTNDPKHKQRQG.

It belongs to the bacterial ribosomal protein bL36 family.

This chain is Large ribosomal subunit protein bL36, found in Buchnera aphidicola subsp. Schizaphis graminum (strain Sg).